The chain runs to 307 residues: Small ribosomal subunit biogenesis GTPase RsgA (307 aa).

Positions 80–237 (KVDLRQAIVS…IVDTPGIKEF (158 aa)) constitute a CP-type G domain. Residues 129-132 (NKID) and 180-188 (GQSGVGKSS) each bind GTP. The Zn(2+) site is built by C261, C266, H268, and C274.

It belongs to the TRAFAC class YlqF/YawG GTPase family. RsgA subfamily. In terms of assembly, monomer. Associates with 30S ribosomal subunit, binds 16S rRNA. The cofactor is Zn(2+).

It is found in the cytoplasm. In terms of biological role, one of several proteins that assist in the late maturation steps of the functional core of the 30S ribosomal subunit. Helps release RbfA from mature subunits. May play a role in the assembly of ribosomal proteins into the subunit. Circularly permuted GTPase that catalyzes slow GTP hydrolysis, GTPase activity is stimulated by the 30S ribosomal subunit. In Borrelia garinii subsp. bavariensis (strain ATCC BAA-2496 / DSM 23469 / PBi) (Borreliella bavariensis), this protein is Small ribosomal subunit biogenesis GTPase RsgA.